The following is a 156-amino-acid chain: S-ribosylhomocysteine lyase (156 aa).

Fe cation-binding residues include His-56, His-60, and Cys-123.

It belongs to the LuxS family. As to quaternary structure, homodimer. Fe cation is required as a cofactor.

The catalysed reaction is S-(5-deoxy-D-ribos-5-yl)-L-homocysteine = (S)-4,5-dihydroxypentane-2,3-dione + L-homocysteine. Its function is as follows. Involved in the synthesis of autoinducer 2 (AI-2) which is secreted by bacteria and is used to communicate both the cell density and the metabolic potential of the environment. The regulation of gene expression in response to changes in cell density is called quorum sensing. Catalyzes the transformation of S-ribosylhomocysteine (RHC) to homocysteine (HC) and 4,5-dihydroxy-2,3-pentadione (DPD). This Staphylococcus saprophyticus subsp. saprophyticus (strain ATCC 15305 / DSM 20229 / NCIMB 8711 / NCTC 7292 / S-41) protein is S-ribosylhomocysteine lyase.